Consider the following 158-residue polypeptide: MGRSRSRTPPRRERRRSRSSSRDRERRRRERERSRSRDRDRRRSRSRSPHRRRSRSPRRHRSSSLSPLRQKDRRDDDRKDVKEKPAKVHQISAEDMQGKTEEEIEMMKLMGFGSFETSKGKKKDGSIKAFAVNVSQKRKYRQYMNRKGGFNRPLDFIA.

Residues 1–30 (MGRSRSRTPPRRERRRSRSSSRDRERRRRE) are compositionally biased toward basic residues. A disordered region spans residues 1-100 (MGRSRSRTPP…ISAEDMQGKT (100 aa)). Residues 31-41 (RERSRSRDRDR) show a composition bias toward basic and acidic residues. Positions 42 to 62 (RRSRSRSPHRRRSRSPRRHRS) are enriched in basic residues. Basic and acidic residues predominate over residues 69-86 (RQKDRRDDDRKDVKEKPA).

It belongs to the SNUT3 family. In terms of assembly, part of a tri-snRNP complex.

It is found in the nucleus. Its function is as follows. May play a role in mRNA splicing. This is U4/U6.U5 small nuclear ribonucleoprotein 27 kDa protein (snrnp27) from Danio rerio (Zebrafish).